A 425-amino-acid chain; its full sequence is MSTVVIIGAQWGDEGKGKIVDFLTEKCDYVVRFQGGCNAGHTVVVGEEKYILHLIPSGILHKNKKCIIGNGVVLDPSGLLKEIETLTQKGVEIDNNLYIAKHCHLIMPYHVAIEEQSEKKKKIGTTKKGIGPCYTDKIARNGVRMIDLLYPDVLKNKIRANLEIINFLLKNLYNAETLDETEILTQYLNYAEKLKKYIADADILINKAIDSGKKVLFEGAQGTLLDIDHGTYPYVTSSNTIAGGACTGAGVSPRKIDNIIGIVKAYTTRVGEGPFPTEIKDSLGEEIRKRGGEYGATTGRPRRCGWLDLVGLRHAVRVNGFTGLAITKLDILDGIEKLKVCVGYKYGNSILEDFPKEIQILEDCMPVYEEFQGWKESTAGIKNYEKLPDNAKKYLKFIEDSLKVKIQIISTGQKRDEIIIKESPL.

Residues 12 to 18 (GDEGKGK) and 40 to 42 (GHT) each bind GTP. The Proton acceptor role is filled by D13. Mg(2+)-binding residues include D13 and G40. IMP is bound by residues 13-16 (DEGK), 38-41 (NAGH), T126, R140, Q221, T236, and R300. The Proton donor role is filled by H41. Residue 296-302 (ATTGRPR) coordinates substrate. Residues R302, 328–330 (KLD), and 410–412 (STG) contribute to the GTP site.

Belongs to the adenylosuccinate synthetase family. As to quaternary structure, homodimer. Requires Mg(2+) as cofactor.

It localises to the cytoplasm. The enzyme catalyses IMP + L-aspartate + GTP = N(6)-(1,2-dicarboxyethyl)-AMP + GDP + phosphate + 2 H(+). It participates in purine metabolism; AMP biosynthesis via de novo pathway; AMP from IMP: step 1/2. Its function is as follows. Plays an important role in the de novo pathway of purine nucleotide biosynthesis. Catalyzes the first committed step in the biosynthesis of AMP from IMP. This chain is Adenylosuccinate synthetase, found in Thermodesulfovibrio yellowstonii (strain ATCC 51303 / DSM 11347 / YP87).